The following is a 314-amino-acid chain: Methionyl-tRNA formyltransferase (314 aa).

109 to 112 (SVLP) contributes to the (6S)-5,6,7,8-tetrahydrofolate binding site.

The protein belongs to the Fmt family.

It catalyses the reaction L-methionyl-tRNA(fMet) + (6R)-10-formyltetrahydrofolate = N-formyl-L-methionyl-tRNA(fMet) + (6S)-5,6,7,8-tetrahydrofolate + H(+). Functionally, attaches a formyl group to the free amino group of methionyl-tRNA(fMet). The formyl group appears to play a dual role in the initiator identity of N-formylmethionyl-tRNA by promoting its recognition by IF2 and preventing the misappropriation of this tRNA by the elongation apparatus. The polypeptide is Methionyl-tRNA formyltransferase (Dictyoglomus turgidum (strain DSM 6724 / Z-1310)).